The sequence spans 338 residues: Very-long-chain 3-oxoacyl-CoA reductase (338 aa).

A helical transmembrane segment spans residues 20 to 40 (LSAFLLVMGSIGVGRVIYQTL). NADP(+) contacts are provided by valine 66, asparagine 95, aspartate 120, asparagine 147, tyrosine 214, lysine 218, valine 247, and serine 249. Tyrosine 214 functions as the Proton donor in the catalytic mechanism. Lysine 218 serves as the catalytic Lowers pKa of active site Tyr.

The protein belongs to the short-chain dehydrogenases/reductases (SDR) family.

The protein resides in the endoplasmic reticulum membrane. It carries out the reaction a very-long-chain (3R)-3-hydroxyacyl-CoA + NADP(+) = a very-long-chain 3-oxoacyl-CoA + NADPH + H(+). It participates in lipid metabolism; fatty acid biosynthesis. Functionally, component of the microsomal membrane bound fatty acid elongation system, which produces the 26-carbon very long-chain fatty acids (VLCFA) from palmitate. Catalyzes the reduction of the 3-ketoacyl-CoA intermediate that is formed in each cycle of fatty acid elongation. VLCFAs serve as precursors for ceramide and sphingolipids. The sequence is that of Very-long-chain 3-oxoacyl-CoA reductase from Laccaria bicolor (strain S238N-H82 / ATCC MYA-4686) (Bicoloured deceiver).